A 455-amino-acid polypeptide reads, in one-letter code: Mu-like prophage FluMu DNA circularization protein (455 aa).

Residues 368 to 387 constitute a DNA-binding region (H-T-H motif); sequence VILDNADAEQWTSYAALEQY.

It to phage Mu protein N.

The chain is Mu-like prophage FluMu DNA circularization protein from Haemophilus influenzae (strain ATCC 51907 / DSM 11121 / KW20 / Rd).